Consider the following 372-residue polypeptide: Cuticle collagen dpy-10 (372 aa).

The signal sequence occupies residues 1–45 (MKNNAKEDYRTFSLTTNYSRQMIYRCVTGLQIGFSLFSFIIVCVA). 3 triple-helical region regions span residues 144 to 173 (GPPG…PGTT), 195 to 251 (GPPG…KGPT), and 259 to 324 (GPPG…PGVC). The interval 144–372 (GPPGPRGSSG…RAGYQGYGRK (229 aa)) is disordered. Pro residues predominate over residues 185–196 (EPPPCRPCPKGP). Over residues 197–208 (PGIKGWPGFPGD) the composition is skewed to low complexity. Composition is skewed to gly residues over residues 237 to 246 (GYRGGPGAPG) and 283 to 292 (GLTGGQGERG). The segment covering 293-303 (WPGVSGESGEP) has biased composition (low complexity). Over residues 353 to 363 (GYGGSRGGGDR) the composition is skewed to gly residues.

Belongs to the cuticular collagen family. Collagen polypeptide chains are complexed within the cuticle by disulfide bonds and other types of covalent cross-links.

Its function is as follows. Nematode cuticles are composed largely of collagen-like proteins. The cuticle functions both as an exoskeleton and as a barrier to protect the worm from its environment. This Caenorhabditis elegans protein is Cuticle collagen dpy-10 (dpy-10).